Reading from the N-terminus, the 325-residue chain is tRNA dimethylallyltransferase (325 aa).

An ATP-binding site is contributed by 12–19 (GPTASGKT). 14-19 (TASGKT) provides a ligand contact to substrate. Interaction with substrate tRNA regions lie at residues 37-40 (DSAL), 161-165 (QRIHR), and 244-249 (RCVGYR).

This sequence belongs to the IPP transferase family. In terms of assembly, monomer. Mg(2+) serves as cofactor.

The catalysed reaction is adenosine(37) in tRNA + dimethylallyl diphosphate = N(6)-dimethylallyladenosine(37) in tRNA + diphosphate. Catalyzes the transfer of a dimethylallyl group onto the adenine at position 37 in tRNAs that read codons beginning with uridine, leading to the formation of N6-(dimethylallyl)adenosine (i(6)A). The chain is tRNA dimethylallyltransferase from Chromobacterium violaceum (strain ATCC 12472 / DSM 30191 / JCM 1249 / CCUG 213 / NBRC 12614 / NCIMB 9131 / NCTC 9757 / MK).